Consider the following 320-residue polypeptide: o-succinylbenzoate synthase (320 aa).

Residue Lys-133 is the Proton donor of the active site. Mg(2+) contacts are provided by Asp-161, Glu-190, and Asp-213. Lys-235 (proton acceptor) is an active-site residue.

The protein belongs to the mandelate racemase/muconate lactonizing enzyme family. MenC type 1 subfamily. Requires a divalent metal cation as cofactor.

The enzyme catalyses (1R,6R)-6-hydroxy-2-succinyl-cyclohexa-2,4-diene-1-carboxylate = 2-succinylbenzoate + H2O. It functions in the pathway quinol/quinone metabolism; 1,4-dihydroxy-2-naphthoate biosynthesis; 1,4-dihydroxy-2-naphthoate from chorismate: step 4/7. The protein operates within quinol/quinone metabolism; menaquinone biosynthesis. Its function is as follows. Converts 2-succinyl-6-hydroxy-2,4-cyclohexadiene-1-carboxylate (SHCHC) to 2-succinylbenzoate (OSB). This chain is o-succinylbenzoate synthase, found in Salmonella heidelberg (strain SL476).